The chain runs to 787 residues: Vacuolar protein sorting-associated protein 35A (787 aa).

M1 is modified (N-acetylmethionine).

Belongs to the VPS35 family. In terms of assembly, component of the retromer complex which consists of VPS29 (MAG1), VPS26 (VPS26A or VPS26B), VPS35 (VPS35A or VPS35B or VPS35C), VPS5/17 (SNX1 or SNX2A or SNX2B). Component of a retromer subcomplex consisting of VPS29 (MAG1), VPS26 (VPS26A or VPS26B), VPS35 (VPS35A or VPS35B or VPS35C). Interacts with RABG3F.

The protein localises to the cytoplasm. The protein resides in the endosome membrane. It localises to the prevacuolar compartment membrane. Its subcellular location is the golgi apparatus. It is found in the trans-Golgi network membrane. Functionally, plays a role in vesicular protein sorting. Component of the membrane-associated retromer complex which is essential in endosome-to-Golgi retrograde transport. Also involved in the efficient sorting of seed storage proteins. Binds alone to endosomal membranes and is required for recruitment of VPS26 and VPS29 to membrane. The VPS29-VPS26-VPS35 subcomplex may be involved in recycling of specific cargos from endosome to the plasma membrane. In Arabidopsis thaliana (Mouse-ear cress), this protein is Vacuolar protein sorting-associated protein 35A (VPS35A).